We begin with the raw amino-acid sequence, 630 residues long: Chaperone protein HtpG (630 aa).

Residues 1–338 form an a; substrate-binding region; sequence MTVEANKETL…SNDLSLNVSR (338 aa). Positions 339-555 are b; sequence EILQNDSTVE…QFDMGAQMKK (217 aa). Positions 556–630 are c; that stretch reads IMEAAGQKVP…LNRLLLELAN (75 aa).

It belongs to the heat shock protein 90 family. In terms of assembly, homodimer.

It localises to the cytoplasm. Functionally, molecular chaperone. Has ATPase activity. In Marinobacter nauticus (strain ATCC 700491 / DSM 11845 / VT8) (Marinobacter aquaeolei), this protein is Chaperone protein HtpG.